A 257-amino-acid chain; its full sequence is Insulin-induced gene 1 protein (257 aa).

The Cytoplasmic segment spans residues 1–64; it reads MPRLHDHVWS…ARPGSWHHDL (64 aa). Residues 32–54 are disordered; it reads CPQGSGAPEPAPRSPRAGTAGCG. A helical membrane pass occupies residues 65 to 87; the sequence is VQRSLVLFSFGVVLALVLNLLQI. Over 88 to 106 the chain is Extracellular; it reads QRNVTLFPDEVIATIFSSA. Residues 107-124 form a helical membrane-spanning segment; sequence WWVPPCCGTAAAVVGLLY. Topologically, residues 125–139 are cytoplasmic; it reads PCIDSHLGEPHKFKR. Glycyl lysine isopeptide (Lys-Gly) (interchain with G-Cter in ubiquitin) cross-links involve residues Lys-136 and Lys-138. A helical membrane pass occupies residues 140–162; it reads EWASVMRCIAVFVGINHASAKLD. Topologically, residues 163–165 are extracellular; that stretch reads FAN. Residues 166-184 form a helical membrane-spanning segment; that stretch reads NVQLSLTLAALSLGLWWTF. At 185–189 the chain is on the cytoplasmic side; that stretch reads DRSRS. Position 187 is a phosphoserine (Ser-187). The chain crosses the membrane as a helical span at residues 190 to 211; it reads GLGLGITIAFLATLITQFLVYN. Residues 212–225 lie on the Extracellular side of the membrane; the sequence is GVYQYTSPDFLYIR. The chain crosses the membrane as a helical span at residues 226 to 243; that stretch reads SWLPCIFFSGGVTVGNIG. The Cytoplasmic segment spans residues 244–257; the sequence is RQLAMGVPEKPHSD. The KxHxx motif lies at 251–257; the sequence is PEKPHSD.

It belongs to the INSIG family. As to quaternary structure, interacts with SCAP; interaction is direct and only takes place in the presence of sterols; it prevents interaction between SCAP and the coat protein complex II (COPII). Associates with the SCAP-SREBP complex (composed of SCAP and SREBF1/SREBP1 or SREBF2/SREBP2); association is mediated via its interaction with SCAP and only takes place in the presence of sterols. Interaction with SCAP is mutually exclusive with PAQR3. Interacts with HMGCR (via its SSD); the interaction, accelerated by sterols, leads to the recruitment of HMGCR to AMFR/gp78 for its ubiquitination by the sterol-mediated ERAD pathway. Interacts with AMFR/gp78 (via its membrane domain); the interaction recruits HMCR at the ER membrane for its ubiquitination and degradation by the sterol-mediated ERAD pathway. Interacts with SOAT2/ACAT2; leading to promote recruitment of AMFR/gp78 and subsequent ubiquitination of SOAT2/ACAT2. Interacts with RNF139. Interacts with RNF145. In terms of processing, phosphorylation at Ser-187 by PCK1 reduces binding to oxysterol, disrupting the interaction between INSIG1 and SCAP, thereby promoting nuclear translocation of SREBP proteins (SREBF1/SREBP1 or SREBF2/SREBP2) and subsequent transcription of downstream lipogenesis-related genes. Post-translationally, ubiquitinated by AMFR/gp78 in response to sterol deprivation, leading to its degradation: when the SCAP-SREBP complex becomes dissociated from INSIG1, INSIG1 is then ubiquitinated and degraded in proteasomes. Although ubiquitination is required for rapid INSIG1 degradation, it is not required for release of the SCAP-SREBP complex. Ubiquitinated by RNF139.

It localises to the endoplasmic reticulum membrane. Its function is as follows. Oxysterol-binding protein that mediates feedback control of cholesterol synthesis by controlling both endoplasmic reticulum to Golgi transport of SCAP and degradation of HMGCR. Acts as a negative regulator of cholesterol biosynthesis by mediating the retention of the SCAP-SREBP complex in the endoplasmic reticulum, thereby blocking the processing of sterol regulatory element-binding proteins (SREBPs) SREBF1/SREBP1 and SREBF2/SREBP2. Binds oxysterol, including 25-hydroxycholesterol, regulating interaction with SCAP and retention of the SCAP-SREBP complex in the endoplasmic reticulum. In presence of oxysterol, interacts with SCAP, retaining the SCAP-SREBP complex in the endoplasmic reticulum, thereby preventing SCAP from escorting SREBF1/SREBP1 and SREBF2/SREBP2 to the Golgi. Sterol deprivation or phosphorylation by PCK1 reduce oxysterol-binding, disrupting the interaction between INSIG1 and SCAP, thereby promoting Golgi transport of the SCAP-SREBP complex, followed by processing and nuclear translocation of SREBF1/SREBP1 and SREBF2/SREBP2. Also regulates cholesterol synthesis by regulating degradation of HMGCR: initiates the sterol-mediated ubiquitin-mediated endoplasmic reticulum-associated degradation (ERAD) of HMGCR via recruitment of the reductase to the ubiquitin ligases AMFR/gp78 and/or RNF139. Also regulates degradation of SOAT2/ACAT2 when the lipid levels are low: initiates the ubiquitin-mediated degradation of SOAT2/ACAT2 via recruitment of the ubiquitin ligases AMFR/gp78. The polypeptide is Insulin-induced gene 1 protein (Cricetulus griseus (Chinese hamster)).